We begin with the raw amino-acid sequence, 836 residues long: Protein AKNAD1 (836 aa).

3 stretches are compositionally biased toward polar residues: residues 159–172 (SWPK…TDQL), 181–192 (SNKPGSATTTEE), and 227–248 (SYQG…NTFK). Disordered stretches follow at residues 159–248 (SWPK…NTFK) and 303–325 (LETT…KITE). Residues 311–323 (CVEKQHQEQKGKI) show a composition bias toward basic and acidic residues. Positions 372-484 (QKISQGKQMC…DVKEKMDESK (113 aa)) form a coiled coil. Disordered regions lie at residues 510–545 (SNEI…EAPN) and 575–596 (MRLS…DCAE).

Belongs to the AKNA family.

This is Protein AKNAD1 (AKNAD1) from Homo sapiens (Human).